A 233-amino-acid chain; its full sequence is Large ribosomal subunit protein uL22m (233 aa).

This sequence belongs to the universal ribosomal protein uL22 family. In terms of assembly, component of the mitochondrial ribosome large subunit (39S) which comprises a 16S rRNA and about 50 distinct proteins.

The protein resides in the mitochondrion. In Drosophila pseudoobscura pseudoobscura (Fruit fly), this protein is Large ribosomal subunit protein uL22m (mRpL22).